A 175-amino-acid polypeptide reads, in one-letter code: Co-chaperone protein HscB homolog (175 aa).

Positions 7–79 (SHFDLFDLPA…LKRATYLLHL (73 aa)) constitute a J domain.

It belongs to the HscB family. As to quaternary structure, interacts with HscA and stimulates its ATPase activity.

In terms of biological role, co-chaperone involved in the maturation of iron-sulfur cluster-containing proteins. Seems to help targeting proteins to be folded toward HscA. The polypeptide is Co-chaperone protein HscB homolog (Paraburkholderia xenovorans (strain LB400)).